The sequence spans 157 residues: Ubiquitin-like protein 4A (157 aa).

Residues 1–76 form the Ubiquitin-like domain; sequence MQLTVKALQG…LNLVVKPLEK (76 aa). Residue Lys-48 forms a Glycyl lysine isopeptide (Lys-Gly) (interchain with G-Cter in ubiquitin) linkage. The residue at position 90 (Ser-90) is a Phosphoserine. A required and sufficient for interaction with BAG6 region spans residues 96-138; the sequence is WHLISKVLARHFSAADASRVLEQLQRDYERSLSRLTLDDIERL.

In terms of assembly, component of the BAG6/BAT3 complex, at least composed of BAG6, UBL4A and GET4/TRC35. Interacts with BAG6; the interaction is direct and required for UBL4A protein stability. Interacts with USP13; may be indirect via BAG6. Polyubiquitinated. Ubiquitination by AMFR and deubiquitination by USP13 may regulate the interaction between the BAG6/BAT3 complex and SGTA and therefore may regulate client proteins fate.

It is found in the cytoplasm. The protein resides in the cytosol. Its subcellular location is the nucleus. Functionally, as part of a cytosolic protein quality control complex, the BAG6/BAT3 complex, maintains misfolded and hydrophobic patches-containing proteins in a soluble state and participates in their proper delivery to the endoplasmic reticulum or alternatively can promote their sorting to the proteasome where they undergo degradation. The BAG6/BAT3 complex is involved in the post-translational delivery of tail-anchored/type II transmembrane proteins to the endoplasmic reticulum membrane. Recruited to ribosomes, it interacts with the transmembrane region of newly synthesized tail-anchored proteins and together with SGTA and ASNA1 mediates their delivery to the endoplasmic reticulum. Client proteins that cannot be properly delivered to the endoplasmic reticulum are ubiquitinated and sorted to the proteasome. Similarly, the BAG6/BAT3 complex also functions as a sorting platform for proteins of the secretory pathway that are mislocalized to the cytosol either delivering them to the proteasome for degradation or to the endoplasmic reticulum. The BAG6/BAT3 complex also plays a role in the endoplasmic reticulum-associated degradation (ERAD), a quality control mechanism that eliminates unwanted proteins of the endoplasmic reticulum through their retrotranslocation to the cytosol and their targeting to the proteasome. It maintains these retrotranslocated proteins in an unfolded yet soluble state condition in the cytosol to ensure their proper delivery to the proteasome. The protein is Ubiquitin-like protein 4A (UBL4A) of Oryctolagus cuniculus (Rabbit).